A 190-amino-acid polypeptide reads, in one-letter code: UPF0301 protein Reut_A0705 (190 aa).

The protein belongs to the UPF0301 (AlgH) family.

The polypeptide is UPF0301 protein Reut_A0705 (Cupriavidus pinatubonensis (strain JMP 134 / LMG 1197) (Cupriavidus necator (strain JMP 134))).